The chain runs to 150 residues: UPF0098 protein TC_0109 (150 aa).

The protein belongs to the UPF0098 family.

In Chlamydia muridarum (strain MoPn / Nigg), this protein is UPF0098 protein TC_0109.